We begin with the raw amino-acid sequence, 145 residues long: Probable D-aminoacyl-tRNA deacylase (145 aa).

Belongs to the DTD family. In terms of assembly, homodimer.

Its subcellular location is the cytoplasm. The enzyme catalyses glycyl-tRNA(Ala) + H2O = tRNA(Ala) + glycine + H(+). It catalyses the reaction a D-aminoacyl-tRNA + H2O = a tRNA + a D-alpha-amino acid + H(+). In terms of biological role, an aminoacyl-tRNA editing enzyme that deacylates mischarged D-aminoacyl-tRNAs. Also deacylates mischarged glycyl-tRNA(Ala), protecting cells against glycine mischarging by AlaRS. Acts via tRNA-based rather than protein-based catalysis; rejects L-amino acids rather than detecting D-amino acids in the active site. By recycling D-aminoacyl-tRNA to D-amino acids and free tRNA molecules, this enzyme counteracts the toxicity associated with the formation of D-aminoacyl-tRNA entities in vivo and helps enforce protein L-homochirality. The chain is Probable D-aminoacyl-tRNA deacylase from Shigella flexneri serotype 5b (strain 8401).